The sequence spans 122 residues: Large ribosomal subunit protein bL12 (122 aa).

It belongs to the bacterial ribosomal protein bL12 family. As to quaternary structure, homodimer. Part of the ribosomal stalk of the 50S ribosomal subunit. Forms a multimeric L10(L12)X complex, where L10 forms an elongated spine to which 2 to 4 L12 dimers bind in a sequential fashion. Binds GTP-bound translation factors.

Functionally, forms part of the ribosomal stalk which helps the ribosome interact with GTP-bound translation factors. Is thus essential for accurate translation. The sequence is that of Large ribosomal subunit protein bL12 from Acinetobacter baumannii (strain AB0057).